We begin with the raw amino-acid sequence, 211 residues long: Large ribosomal subunit protein uL4 (211 aa).

Positions 41 to 53 (QAHSRQGTASTLT) are enriched in polar residues. The interval 41-78 (QAHSRQGTASTLTRAEVRGGGRKPYKQKGTGRARQGTI) is disordered. The segment covering 60 to 71 (GGRKPYKQKGTG) has biased composition (basic residues).

This sequence belongs to the universal ribosomal protein uL4 family. As to quaternary structure, part of the 50S ribosomal subunit.

In terms of biological role, one of the primary rRNA binding proteins, this protein initially binds near the 5'-end of the 23S rRNA. It is important during the early stages of 50S assembly. It makes multiple contacts with different domains of the 23S rRNA in the assembled 50S subunit and ribosome. Functionally, forms part of the polypeptide exit tunnel. The polypeptide is Large ribosomal subunit protein uL4 (Prochlorococcus marinus (strain MIT 9313)).